The chain runs to 29 residues: Snake venom metalloproteinase bothrolysin (29 aa).

One can recognise a Peptidase M12B domain in the interval 6–29 (RYIELFLVVDSGMFMKYNGNSDKI). Glu-9 is a Ca(2+) binding site.

Belongs to the venom metalloproteinase (M12B) family. Zn(2+) is required as a cofactor. As to expression, expressed by the venom gland.

The protein resides in the secreted. The enzyme catalyses Cleavage of 4-Gln-|-His-5, 9-Ser-|-His-10 and 14-Ala-|-Leu-15 of insulin B chain and Pro-|-Phe of angiotensin I.. Its function is as follows. Snake venom zinc metalloproteinase that impairs hemostasis in the envenomed animal. This Bothrops jararaca (Jararaca) protein is Snake venom metalloproteinase bothrolysin.